The chain runs to 213 residues: Glycerol-3-phosphate acyltransferase (213 aa).

5 consecutive transmembrane segments (helical) span residues 3-23 (LLLF…LWIG), 68-88 (ILLP…GFFA), 112-132 (VLLG…VLVL), 134-154 (LFSM…LSVL), and 163-183 (LPNY…IIII).

Belongs to the PlsY family. As to quaternary structure, probably interacts with PlsX.

Its subcellular location is the cell membrane. It carries out the reaction an acyl phosphate + sn-glycerol 3-phosphate = a 1-acyl-sn-glycero-3-phosphate + phosphate. The protein operates within lipid metabolism; phospholipid metabolism. Functionally, catalyzes the transfer of an acyl group from acyl-phosphate (acyl-PO(4)) to glycerol-3-phosphate (G3P) to form lysophosphatidic acid (LPA). This enzyme utilizes acyl-phosphate as fatty acyl donor, but not acyl-CoA or acyl-ACP. This chain is Glycerol-3-phosphate acyltransferase, found in Streptococcus pyogenes serotype M28 (strain MGAS6180).